The sequence spans 486 residues: Malonate-semialdehyde dehydrogenase (486 aa).

NAD(+)-binding residues include F154, K178, E181, R182, and S231. Catalysis depends on C286, which acts as the Nucleophile. NAD(+) is bound at residue E386.

It belongs to the aldehyde dehydrogenase family. IolA subfamily. As to quaternary structure, homotetramer.

It carries out the reaction 3-oxopropanoate + NAD(+) + CoA + H2O = hydrogencarbonate + acetyl-CoA + NADH + H(+). It catalyses the reaction 2-methyl-3-oxopropanoate + NAD(+) + CoA + H2O = propanoyl-CoA + hydrogencarbonate + NADH + H(+). Its pathway is polyol metabolism; myo-inositol degradation into acetyl-CoA; acetyl-CoA from myo-inositol: step 7/7. Catalyzes the oxidation of malonate semialdehyde (MSA) and methylmalonate semialdehyde (MMSA) into acetyl-CoA and propanoyl-CoA, respectively. Is involved in a myo-inositol catabolic pathway. Bicarbonate, and not CO2, is the end-product of the enzymatic reaction. The polypeptide is Malonate-semialdehyde dehydrogenase (Bacillus cereus (strain AH187)).